A 427-amino-acid polypeptide reads, in one-letter code: Gamma-glutamyl phosphate reductase (427 aa).

This sequence belongs to the gamma-glutamyl phosphate reductase family.

Its subcellular location is the cytoplasm. It carries out the reaction L-glutamate 5-semialdehyde + phosphate + NADP(+) = L-glutamyl 5-phosphate + NADPH + H(+). Its pathway is amino-acid biosynthesis; L-proline biosynthesis; L-glutamate 5-semialdehyde from L-glutamate: step 2/2. Catalyzes the NADPH-dependent reduction of L-glutamate 5-phosphate into L-glutamate 5-semialdehyde and phosphate. The product spontaneously undergoes cyclization to form 1-pyrroline-5-carboxylate. The protein is Gamma-glutamyl phosphate reductase of Anaeromyxobacter sp. (strain K).